We begin with the raw amino-acid sequence, 482 residues long: MRLVDLLKGVKHEIKGNPNVDISGVCYDSRKAKPKYLFIAIKGFKTDGLLYVEEAIKNGAVAVVTDRDISEYPGVTVVLVEDARAAMAKIASNFYNNPTSKLTLIGITGTNGKTSVTYMLKAILEQQNNKVGLVGTIQNMIGDRVIPTTHTTPESLDLQELFSLMVNEGVKYVVMEVSSHSLALHRVDSCDFDIAVFTNLSQDHLDFHESMEEYAKTKSKLFKMAKKASVINIDDKYSSMMIESSKGKVLTYGIKDFAYVMAKEIKNSLSGVKFKVQIQDKKEEISLKIPGLFSVYNALAAITVADFLGIPLRSVREALSHVTVKGRFEPVETGRDFYVFIDYAHTPDGIRNIMEALKEYEAGRKILVFGAGGDRDKSKRPLMGEVAGKYADFCILTSDNPRSENPKEIIAQIEEGIKKTNCPYVVIEDRREAIRYALSNAQKDDVIILAGKGHETYQIIGDKVIPFDEREIVKEILAESEK.

S29 contacts UDP-N-acetyl-alpha-D-muramoyl-L-alanyl-D-glutamate. 109–115 (GTNGKTS) contacts ATP. UDP-N-acetyl-alpha-D-muramoyl-L-alanyl-D-glutamate contacts are provided by residues 151-152 (TT), S178, and R186. K218 is subject to N6-carboxylysine. Residues R375, 399–402 (DNPR), G451, and E455 each bind meso-2,6-diaminopimelate. A Meso-diaminopimelate recognition motif motif is present at residues 399-402 (DNPR).

Belongs to the MurCDEF family. MurE subfamily. Mg(2+) serves as cofactor. In terms of processing, carboxylation is probably crucial for Mg(2+) binding and, consequently, for the gamma-phosphate positioning of ATP.

Its subcellular location is the cytoplasm. It catalyses the reaction UDP-N-acetyl-alpha-D-muramoyl-L-alanyl-D-glutamate + meso-2,6-diaminopimelate + ATP = UDP-N-acetyl-alpha-D-muramoyl-L-alanyl-gamma-D-glutamyl-meso-2,6-diaminopimelate + ADP + phosphate + H(+). It functions in the pathway cell wall biogenesis; peptidoglycan biosynthesis. Its function is as follows. Catalyzes the addition of meso-diaminopimelic acid to the nucleotide precursor UDP-N-acetylmuramoyl-L-alanyl-D-glutamate (UMAG) in the biosynthesis of bacterial cell-wall peptidoglycan. In Caldanaerobacter subterraneus subsp. tengcongensis (strain DSM 15242 / JCM 11007 / NBRC 100824 / MB4) (Thermoanaerobacter tengcongensis), this protein is UDP-N-acetylmuramoyl-L-alanyl-D-glutamate--2,6-diaminopimelate ligase.